Here is a 561-residue protein sequence, read N- to C-terminus: MNINVAELLNGNYILLLFVVLALGLCLGKLRLGSIQLGNSIGVLVVSLLLGQQHFSINTDALNLGFMLFIFCVGVEAGPNFFSIFFRDGKNYLMLALVMVGSALVIALGLGKLFGWDIGLTAGMLAGSMTSTPVLVGAGDTLRHSGMESRQLSLALDNLSLGYALTYLIGLVSLIVGARYLPKLQHQDLQTSAQQIARERGLDTDANRKVYLPVIRAYRVGPELVAWTDGKNLRELGIYRQTGCYIERIRRNGILANPDGDAVLQMGDEIALVGYPDAHARLDPSFRNGKEVFDRDLLDMRIVTEEVVVKNHNAVGKCLAQLKLTDHGCFLNRVIRSQIEMPIDDNVVLNKGDVLQVSGDARRVKTIADRIGFISIHSQVTDLLAFCAFFVIGLMIGMITFQFSTFSFGMGNAAGLLFAGIMLGFMRANHPTFGYIPQGALSMVKEFGLMVFMAGVGLSAGSGINNGLGAIGGQMLIAGLIVSLVPVVICFLFGAYVLRMNRALLFGAMMGARTCAPAMEIISDTARSNIPALGYAGTYAIANVLLTLAGTIIVMVCPGLG.

5 helical membrane-spanning segments follow: residues 8–28 (LLNGNYILLLFVVLALGLCLG), 32–52 (LGSIQLGNSIGVLVVSLLLGQ), 66–86 (FMLFIFCVGVEAGPNFFSIFF), 94–114 (MLALVMVGSALVIALGLGKLF), and 158–178 (NLSLGYALTYLIGLVSLIVGA). RCK C-terminal domains follow at residues 200-288 (RGLD…SFRN) and 292-373 (VFDR…RIGF). Transmembrane regions (helical) follow at residues 383–403 (LLAFCAFFVIGLMIGMITFQF), 406–426 (FSFGMGNAAGLLFAGIMLGFM), 451–471 (VFMAGVGLSAGSGINNGLGAI), 475–495 (MLIAGLIVSLVPVVICFLFGA), 503–523 (ALLFGAMMGARTCAPAMEIIS), and 540–560 (AIANVLLTLAGTIIVMVCPGL).

The protein belongs to the AAE transporter (TC 2.A.81) family. YbjL subfamily.

It localises to the cell membrane. The protein is Putative transport protein YbjL of Shigella dysenteriae serotype 1 (strain Sd197).